The primary structure comprises 2097 residues: SCAR-like protein 1 (2097 aa).

7 disordered regions span residues 205-227 (IANS…PRTT), 544-565 (AHSS…SIES), 1443-1467 (SQIA…PLSS), 1588-1616 (STEE…DPQK), 1730-1802 (QERV…EKTV), 1820-1842 (ASSH…PVTS), and 1893-1944 (YEGP…EGGY). The span at 549-562 (KQSSQKSSGLDGSS) shows a compositional bias: low complexity. Positions 1443–1454 (SQIASCSPTPSN) are enriched in polar residues. Positions 1766–1794 (SISQQGLQGSVFPSDTSDNGEHSSYTSRA) are enriched in polar residues. The span at 1908-1922 (YPHDDHNSEKEDIHQ) shows a compositional bias: basic and acidic residues. Positions 2028–2046 (ERNLLLEQIRNKTFNLKPV) constitute a WH2 domain.

It belongs to the SCAR/WAVE family.

It localises to the cytoplasm. It is found in the cytoskeleton. Functionally, involved in regulation of actin and microtubule organization. Part of a WAVE complex that activates the Arp2/3 complex. This is SCAR-like protein 1 from Oryza sativa subsp. japonica (Rice).